The following is a 196-amino-acid chain: Probable DNA-directed RNA polymerase subunit delta (196 aa).

The 68-residue stretch at 14-81 (LSMIEVAHEI…GDNVWGLRSW (68 aa)) folds into the HTH HARE-type domain. Residues 119–150 (DDDDVIDYDDDDPEDEDLDNDYDDEDDDDDEG) are compositionally biased toward acidic residues. Positions 119–196 (DDDDVIDYDD…DADLDEENQD (78 aa)) are disordered. Residues 151-161 (SHELKQYTKDL) are compositionally biased toward basic and acidic residues. Composition is skewed to acidic residues over residues 162–176 (DDID…ELAD) and 186–196 (SDADLDEENQD).

It belongs to the RpoE family. In terms of assembly, RNAP is composed of a core of 2 alpha, a beta and a beta' subunits. The core is associated with a delta subunit and one of several sigma factors.

Its function is as follows. Participates in both the initiation and recycling phases of transcription. In the presence of the delta subunit, RNAP displays an increased specificity of transcription, a decreased affinity for nucleic acids, and an increased efficiency of RNA synthesis because of enhanced recycling. The chain is Probable DNA-directed RNA polymerase subunit delta from Ligilactobacillus salivarius (strain UCC118) (Lactobacillus salivarius).